Reading from the N-terminus, the 617-residue chain is Procollagen galactosyltransferase 1 (617 aa).

Residues 1–31 (MAALPRGSRGLPLLPLLLLLPPLGGPRGADG) form the signal peptide. Residues N91, N179, and N376 are each glycosylated (N-linked (GlcNAc...) asparagine). The segment covering 582–601 (DRAKSQKMREQQALSREAKN) has biased composition (basic and acidic residues). The tract at residues 582–617 (DRAKSQKMREQQALSREAKNSDVLQSPLDSTARDEL) is disordered. The Prevents secretion from ER motif lies at 614 to 617 (RDEL).

Belongs to the glycosyltransferase 25 family. N-glycosylated.

Its subcellular location is the endoplasmic reticulum lumen. It catalyses the reaction (5R)-5-hydroxy-L-lysyl-[collagen] + UDP-alpha-D-galactose = (5R)-5-O-(beta-D-galactosyl)-5-hydroxy-L-lysyl-[collagen] + UDP + H(+). Beta-galactosyltransferase that transfers beta-galactose to hydroxylysine residues of type I collagen. By acting on collagen glycosylation, facilitates the formation of collagen triple helix. Also involved in the biosynthesis of collagen type IV. In Mus musculus (Mouse), this protein is Procollagen galactosyltransferase 1 (Colgalt1).